The chain runs to 454 residues: MESVGHSLLTLSVLCPVGALLLCWVGSVLLGAGLLPSLTLSTRDPSTTLSRTPWLVVLVPLLVLWGWRWLSRPMELLRSPEEVGYIPERGRSRAQTANLVRRRRMKGELPPIYPNGWYRALDSHLLPPGTVQDCTLLGEQLAVYRTLEGKVYVVDAYCPHLGANLAVGGKVVGDCIECPFHGWQFRGEDGKCTRIPYAEKVPDFAKIKTRPSCELNGMVFVWYHCDGIEPTWSVPEQEEITKKEWVYHGRTEHYVNAHIEEIPENAADIAHLDFLHTPGILSGVDLRYTKSRIWDFVKHSWKVQWIPEPAPNKHCSQMLLAHSILLFGKHFPLLDVNVVARQVGPGIVFLHFKHAFLGEGVIVHCVTPVEPLLQKVSHSIYYQKNIPALIPKFILKAECIQFERDVMIWNNKKYISKPMLVKEDAAIQKHRRWFSQFYSNNSPQITFQQEGLDW.

2 helical membrane-spanning segments follow: residues 13 to 33 and 47 to 67; these read VLCP…LGAG and TTLS…LWGW. The Rieske domain maps to 117–221; sequence WYRALDSHLL…SCELNGMVFV (105 aa). Positions 158, 160, 178, and 181 each coordinate [2Fe-2S] cluster.

Belongs to the cholesterol 7-desaturase family. Requires [2Fe-2S] cluster as cofactor.

The protein localises to the membrane. It catalyses the reaction cholesterol + NADPH + O2 + H(+) = 7-dehydrocholesterol + NADP(+) + 2 H2O. The enzyme catalyses cholesterol + NADH + O2 + H(+) = 7-dehydrocholesterol + NAD(+) + 2 H2O. Its pathway is steroid hormone biosynthesis; dafachronic acid biosynthesis. Functionally, catalyzes the production of 7-dehydrocholesterol (7-DHC or cholesta-5,7-dien-3beta-ol) by inserting a double bond (desaturating) at the C7-C8 single bond of cholesterol. This reaction is the first step in the synthesis of the steroid hormone Delta(7)-dafachronic acid. In Xenopus laevis (African clawed frog), this protein is Cholesterol 7-desaturase nvd (nvd).